Here is a 341-residue protein sequence, read N- to C-terminus: Phenylalanine--tRNA ligase alpha subunit (341 aa).

A Mg(2+)-binding site is contributed by Glu-253.

Belongs to the class-II aminoacyl-tRNA synthetase family. Phe-tRNA synthetase alpha subunit type 1 subfamily. In terms of assembly, tetramer of two alpha and two beta subunits. It depends on Mg(2+) as a cofactor.

It localises to the cytoplasm. The catalysed reaction is tRNA(Phe) + L-phenylalanine + ATP = L-phenylalanyl-tRNA(Phe) + AMP + diphosphate + H(+). The polypeptide is Phenylalanine--tRNA ligase alpha subunit (Methylococcus capsulatus (strain ATCC 33009 / NCIMB 11132 / Bath)).